Reading from the N-terminus, the 454-residue chain is Phenylalanine--tRNA ligase, mitochondrial (454 aa).

Residues 141 to 144 (SAHQ), arginine 163, 170 to 172 (VHY), 177 to 179 (QME), glutamate 266, and phenylalanine 291 each bind substrate. A disordered region spans residues 327–347 (KSISTSSSSSSSSSSSSSSTL). The segment covering 328–347 (SISTSSSSSSSSSSSSSSTL) has biased composition (low complexity). In terms of domain architecture, FDX-ACB spans 361-454 (SKYPSCFKDV…LENHLSVKLR (94 aa)).

Belongs to the class-II aminoacyl-tRNA synthetase family. Monomer.

The protein localises to the mitochondrion matrix. The enzyme catalyses tRNA(Phe) + L-phenylalanine + ATP = L-phenylalanyl-tRNA(Phe) + AMP + diphosphate + H(+). Its function is as follows. Is responsible for the charging of tRNA(Phe) with phenylalanine in mitochondrial translation. This chain is Phenylalanine--tRNA ligase, mitochondrial (mpheS), found in Dictyostelium discoideum (Social amoeba).